Here is a 77-residue protein sequence, read N- to C-terminus: Apelin (77 aa).

A signal peptide spans 1-22 (MNLSFCVQALLLLWLSLTAVCG). A propeptide spanning residues 23–41 (VPLMLPPDGKGLEEGNMRY) is cleaved from the precursor. The disordered stretch occupies residues 45 to 77 (PRTSRTGPGAWQGGRRKFRRQRPRLSHKGPMPF). Over residues 58–71 (GRRKFRRQRPRLSH) the composition is skewed to basic residues.

The protein belongs to the apelin family. Post-translationally, several active peptides may be produced by proteolytic processing of the peptide precursor. Expressed in the lung, testis, ovary, uterus and mammary gland. Expressed in neurons in the thalamic paraventricular and hypothalamic supraoptic nuclei. The lung, testis and uterus mainly contain a large form that looks like apelin-36, whereas the mammary gland seems to contain 2 forms of apelin, a large form close to apelin-36 and a small form close to apelin-13 (at protein level). Widely expressed in the adult, with highest levels in the mammary gland of lactating animals, very high levels in the lung, intermediate levels in the spinal cord, ovary, adipose tissue, brain (neuronal cell bodies and fibers in the supraoptic and the paraventricular nuclei), heart and testis, and lowest levels in the pituitary gland, kidney, stomach, uterus and pancreas.

The protein localises to the secreted. Its subcellular location is the extracellular space. Peptide hormone that functions as endogenous ligand for the G-protein-coupled apelin receptor (APLNR/APJ), that plays a role in cadiovascular homeostasis. Functions as a balanced agonist activating both G(i) protein pathway and beta-arrestin pathway of APLNR. Downstream G proteins activation, apelin can inhibit cAMP production and activate key intracellular effectors such as ERKs. On the other hand, APLNR activation induces beta-arrestin recruitment to the membrane leading to desensitization and internalization of the receptor. Apelin blunts cardiac hypertrophic induction from APLNR on response to pathological stimuli, but also induces myocardial hypertrophy under normal conditions. Apelin-36 dissociates more hardly than (pyroglu)apelin-13 from APLNR. Involved in the regulation of cardiac precursor cell movements during gastrulation and heart morphogenesis. Has an inhibitory effect on cytokine production in response to T-cell receptor/CD3 cross-linking; the oral intake of apelin in the colostrum and the milk might therefore modulate immune responses in neonates. Plays a role in early coronary blood vessels formation. Mediates myocardial contractility in an ERK1/2-dependent manner. May also have a role in the central control of body fluid homeostasis by influencing vasopressin release and drinking behavior. This Rattus norvegicus (Rat) protein is Apelin.